The following is a 139-amino-acid chain: Small ribosomal subunit protein uS12m (139 aa).

A mitochondrion-targeting transit peptide spans 1–29 (MSWSGPLRGLNTSLTCGPALVPRLWATCS). Residues 36-56 (MHRLGGPPKRPPQKLGPTEGR) form a disordered region.

This sequence belongs to the universal ribosomal protein uS12 family. Component of the mitochondrial ribosome small subunit (28S) which comprises a 12S rRNA and about 30 distinct proteins.

Its subcellular location is the mitochondrion. The protein is Small ribosomal subunit protein uS12m (MRPS12) of Pongo abelii (Sumatran orangutan).